Here is a 438-residue protein sequence, read N- to C-terminus: Argininosuccinate lyase (438 aa).

Belongs to the lyase 1 family. Argininosuccinate lyase subfamily.

The protein resides in the cytoplasm. It catalyses the reaction 2-(N(omega)-L-arginino)succinate = fumarate + L-arginine. It participates in amino-acid biosynthesis; L-arginine biosynthesis; L-arginine from L-ornithine and carbamoyl phosphate: step 3/3. The chain is Argininosuccinate lyase from Clostridium tetani (strain Massachusetts / E88).